A 103-amino-acid chain; its full sequence is Large ribosomal subunit protein bL21 (103 aa).

This sequence belongs to the bacterial ribosomal protein bL21 family. In terms of assembly, part of the 50S ribosomal subunit. Contacts protein L20.

This protein binds to 23S rRNA in the presence of protein L20. The protein is Large ribosomal subunit protein bL21 of Pasteurella multocida (strain Pm70).